A 343-amino-acid polypeptide reads, in one-letter code: Methionine import ATP-binding protein MetN 1 (343 aa).

The 240-residue stretch at 2–241 (IKLSNITKVF…PKTPLAQKFI (240 aa)) folds into the ABC transporter domain. 38-45 (GASGAGKS) provides a ligand contact to ATP.

Belongs to the ABC transporter superfamily. Methionine importer (TC 3.A.1.24) family. The complex is composed of two ATP-binding proteins (MetN), two transmembrane proteins (MetI) and a solute-binding protein (MetQ).

It is found in the cell inner membrane. It carries out the reaction L-methionine(out) + ATP + H2O = L-methionine(in) + ADP + phosphate + H(+). The enzyme catalyses D-methionine(out) + ATP + H2O = D-methionine(in) + ADP + phosphate + H(+). Functionally, part of the ABC transporter complex MetNIQ involved in methionine import. Responsible for energy coupling to the transport system. The chain is Methionine import ATP-binding protein MetN 1 from Salmonella typhi.